The chain runs to 254 residues: Putative epimerase LsrE (254 aa).

Residues 14–34 (VALLASYPLSVGILAGQWIAL) traverse the membrane as a helical segment. Residues His-50, Asp-52, and His-81 each coordinate a divalent metal cation. Catalysis depends on Asp-52, which acts as the Proton acceptor. Substrate-binding positions include His-81, 166–169 (GYGS), 199–201 (DGS), and 221–222 (GS). Asp-199 contributes to the a divalent metal cation binding site. Asp-199 serves as the catalytic Proton donor.

It belongs to the ribulose-phosphate 3-epimerase family. It depends on a divalent metal cation as a cofactor.

The protein localises to the cell membrane. In Salmonella typhi, this protein is Putative epimerase LsrE (lsrE).